The primary structure comprises 485 residues: Glutamyl-tRNA(Gln) amidotransferase subunit A (485 aa).

Residues lysine 78 and serine 153 each act as charge relay system in the active site. The Acyl-ester intermediate role is filled by serine 177.

The protein belongs to the amidase family. GatA subfamily. In terms of assembly, heterotrimer of A, B and C subunits.

It catalyses the reaction L-glutamyl-tRNA(Gln) + L-glutamine + ATP + H2O = L-glutaminyl-tRNA(Gln) + L-glutamate + ADP + phosphate + H(+). Functionally, allows the formation of correctly charged Gln-tRNA(Gln) through the transamidation of misacylated Glu-tRNA(Gln) in organisms which lack glutaminyl-tRNA synthetase. The reaction takes place in the presence of glutamine and ATP through an activated gamma-phospho-Glu-tRNA(Gln). In Geobacter metallireducens (strain ATCC 53774 / DSM 7210 / GS-15), this protein is Glutamyl-tRNA(Gln) amidotransferase subunit A.